A 361-amino-acid chain; its full sequence is Histidinol-phosphate aminotransferase (361 aa).

N6-(pyridoxal phosphate)lysine is present on Lys-219.

Belongs to the class-II pyridoxal-phosphate-dependent aminotransferase family. Histidinol-phosphate aminotransferase subfamily. In terms of assembly, homodimer. Requires pyridoxal 5'-phosphate as cofactor.

It catalyses the reaction L-histidinol phosphate + 2-oxoglutarate = 3-(imidazol-4-yl)-2-oxopropyl phosphate + L-glutamate. Its pathway is amino-acid biosynthesis; L-histidine biosynthesis; L-histidine from 5-phospho-alpha-D-ribose 1-diphosphate: step 7/9. This chain is Histidinol-phosphate aminotransferase, found in Acinetobacter baylyi (strain ATCC 33305 / BD413 / ADP1).